A 116-amino-acid polypeptide reads, in one-letter code: Large ribosomal subunit protein bL19 (116 aa).

Belongs to the bacterial ribosomal protein bL19 family.

This protein is located at the 30S-50S ribosomal subunit interface and may play a role in the structure and function of the aminoacyl-tRNA binding site. This is Large ribosomal subunit protein bL19 from Lactobacillus gasseri (strain ATCC 33323 / DSM 20243 / BCRC 14619 / CIP 102991 / JCM 1131 / KCTC 3163 / NCIMB 11718 / NCTC 13722 / AM63).